The chain runs to 221 residues: uncharacterized protein (221 aa).

2 stretches are compositionally biased toward low complexity: residues 1–27 (MNNN…NNNN) and 140–162 (TTTS…NSSS). Disordered stretches follow at residues 1–28 (MNNN…NNNE) and 140–205 (TTTS…NIGG).

This is an uncharacterized protein from Dictyostelium discoideum (Social amoeba).